Reading from the N-terminus, the 112-residue chain is Putative acyl carrier protein, mitochondrial (112 aa).

Residues 1-28 constitute a mitochondrion transit peptide; sequence MLSRFSSQLRFISAVRPVIPKFQPLRFY. A Carrier domain is found at 33–109; it reads PDAEKRILKV…DAISYITKNP (77 aa). Position 69 is an O-(pantetheine 4'-phosphoryl)serine (S69).

Belongs to the acyl carrier protein (ACP) family. 4'-phosphopantetheine is transferred from CoA to a specific serine of apo-ACP by acpS. This modification is essential for activity because fatty acids are bound in thioester linkage to the sulfhydryl of the prosthetic group.

Its subcellular location is the mitochondrion. Its pathway is lipid metabolism; fatty acid biosynthesis. Its function is as follows. Carrier of the growing fatty acid chain in fatty acid biosynthesis. May be involved in the synthesis of very-long-chain fatty acids. The polypeptide is Putative acyl carrier protein, mitochondrial (Schizosaccharomyces pombe (strain 972 / ATCC 24843) (Fission yeast)).